A 343-amino-acid chain; its full sequence is Protein SOSEKI 4 (343 aa).

The interval 18–109 is DIX-like oligomerization domain; it reads RIVPVVYYLS…YVLKGSQILD (92 aa). The tract at residues 148–194 is disordered; sequence RKLSMDASTQTDDRRRRKSPVDEVNEVTELSREEITSPPQSDSSPET. Polar residues predominate over residues 184 to 194; that stretch reads SPPQSDSSPET. An Association to cell membranes motif is present at residues 233 to 234; that stretch reads CG.

It belongs to the SOSEKI family. In terms of assembly, homodimer. Forms long polymer filaments with other SOKs proteins polymers (e.g. SOK1, SOK2, SOK3 and SOK4) crucial for polar localization and biological activity. Binds to ANGUSTIFOLIA (AN). In terms of tissue distribution, expressed during embryogenesis and in roots.

It is found in the cell membrane. Its function is as follows. SOSEKI proteins (SOK1-5) locally interpret global polarity cues and can influence cell division orientation to coordinate cell polarization relative to body axes, probably by guiding ANGUSTIFOLIA (AN) polarized localization. Positive regulator of auxin (indole-3-acetic acid, IAA) biosynthesis and signaling pathway leading to the modulation of seedling growth, plant and inflorescence development. Negative regulator of stress responses (e.g. salinity and osmotic stress). The polypeptide is Protein SOSEKI 4 (Arabidopsis thaliana (Mouse-ear cress)).